Consider the following 236-residue polypeptide: tRNA (guanine-N(1)-)-methyltransferase (236 aa).

S-adenosyl-L-methionine-binding positions include Gly113 and 133–138 (IGDYVL).

The protein belongs to the RNA methyltransferase TrmD family. As to quaternary structure, homodimer.

It localises to the cytoplasm. It carries out the reaction guanosine(37) in tRNA + S-adenosyl-L-methionine = N(1)-methylguanosine(37) in tRNA + S-adenosyl-L-homocysteine + H(+). Its function is as follows. Specifically methylates guanosine-37 in various tRNAs. The chain is tRNA (guanine-N(1)-)-methyltransferase from Lachnospira eligens (strain ATCC 27750 / DSM 3376 / VPI C15-48 / C15-B4) (Eubacterium eligens).